Here is a 299-residue protein sequence, read N- to C-terminus: ATP phosphoribosyltransferase (299 aa).

The protein belongs to the ATP phosphoribosyltransferase family. Long subfamily. It depends on Mg(2+) as a cofactor.

The protein resides in the cytoplasm. It catalyses the reaction 1-(5-phospho-beta-D-ribosyl)-ATP + diphosphate = 5-phospho-alpha-D-ribose 1-diphosphate + ATP. Its pathway is amino-acid biosynthesis; L-histidine biosynthesis; L-histidine from 5-phospho-alpha-D-ribose 1-diphosphate: step 1/9. With respect to regulation, feedback inhibited by histidine. Its function is as follows. Catalyzes the condensation of ATP and 5-phosphoribose 1-diphosphate to form N'-(5'-phosphoribosyl)-ATP (PR-ATP). Has a crucial role in the pathway because the rate of histidine biosynthesis seems to be controlled primarily by regulation of HisG enzymatic activity. This Campylobacter jejuni subsp. jejuni serotype O:2 (strain ATCC 700819 / NCTC 11168) protein is ATP phosphoribosyltransferase.